The sequence spans 164 residues: MKTYRRQIREKILQALYTLELRDTDIDSAAGWLLTPEILADPKAMKFFNLLLGNIKEHMEEIDRYIAAHTFNWDMSRIAIIDKNILRMAMAELLYCDDIPPKVSINEAIEIAKKFSSTDKSSKFVNGILDAIFNALKEEGKINKNGRGLIDHTPPRAAKTDAKS.

Residues 144–164 (KNGRGLIDHTPPRAAKTDAKS) are disordered. Over residues 149 to 164 (LIDHTPPRAAKTDAKS) the composition is skewed to basic and acidic residues.

The protein belongs to the NusB family.

Functionally, involved in transcription antitermination. Required for transcription of ribosomal RNA (rRNA) genes. Binds specifically to the boxA antiterminator sequence of the ribosomal RNA (rrn) operons. The chain is Transcription antitermination protein NusB from Chlorobium phaeovibrioides (strain DSM 265 / 1930) (Prosthecochloris vibrioformis (strain DSM 265)).